We begin with the raw amino-acid sequence, 206 residues long: Small ribosomal subunit protein uS4 (206 aa).

An S4 RNA-binding domain is found at 96-156; that stretch reads GRLDNVVYRM…EKAKKQARIK (61 aa).

This sequence belongs to the universal ribosomal protein uS4 family. In terms of assembly, part of the 30S ribosomal subunit. Contacts protein S5. The interaction surface between S4 and S5 is involved in control of translational fidelity.

In terms of biological role, one of the primary rRNA binding proteins, it binds directly to 16S rRNA where it nucleates assembly of the body of the 30S subunit. Its function is as follows. With S5 and S12 plays an important role in translational accuracy. This chain is Small ribosomal subunit protein uS4, found in Tolumonas auensis (strain DSM 9187 / NBRC 110442 / TA 4).